The following is a 141-amino-acid chain: MSNITIYHNPTCGTSRNTLEMIRNSGNEPTVIYYLETPPTHDELVKLIADMGITVRALLRKNVEPYEELGLAEGTFSDEQLIGFMLEHPILINRPIVVTPLGTRLCRPSEVVLDILPEPQQGAFTKEDGEKITDESGKRLK.

Cysteine 12 (nucleophile; cysteine thioarsenate intermediate) is an active-site residue. Positions 122–141 (GAFTKEDGEKITDESGKRLK) are disordered. Positions 125-141 (TKEDGEKITDESGKRLK) are enriched in basic and acidic residues.

This sequence belongs to the ArsC family.

It catalyses the reaction [glutaredoxin]-dithiol + arsenate + glutathione + H(+) = glutathionyl-S-S-[glutaredoxin] + arsenite + H2O. Its function is as follows. Involved in resistance to arsenate. Catalyzes the reduction of arsenate [As(V)] to arsenite [As(III)]. The sequence is that of Arsenate reductase (arsC) from Yersinia enterocolitica.